A 149-amino-acid polypeptide reads, in one-letter code: Large ribosomal subunit protein bL9 (149 aa).

The protein belongs to the bacterial ribosomal protein bL9 family.

In terms of biological role, binds to the 23S rRNA. The sequence is that of Large ribosomal subunit protein bL9 from Actinobacillus succinogenes (strain ATCC 55618 / DSM 22257 / CCUG 43843 / 130Z).